Consider the following 417-residue polypeptide: uncharacterized protein (417 aa).

Disordered regions lie at residues 1 to 41 (MDSE…EDQA) and 233 to 262 (QDSAYNDQAPSTSYHHHHHEQLEAGKSTRS). Basic and acidic residues predominate over residues 31-41 (DEDHIFHEDQA). Over residues 235–245 (SAYNDQAPSTS) the composition is skewed to polar residues.

This is an uncharacterized protein from Caenorhabditis elegans.